The sequence spans 170 residues: ATP synthase subunit b (170 aa).

Residues 3–23 (IKILFFLALPFLAYASEHGGT) traverse the membrane as a helical segment.

Belongs to the ATPase B chain family. As to quaternary structure, F-type ATPases have 2 components, F(1) - the catalytic core - and F(0) - the membrane proton channel. F(1) has five subunits: alpha(3), beta(3), gamma(1), delta(1), epsilon(1). F(0) has three main subunits: a(1), b(2) and c(10-14). The alpha and beta chains form an alternating ring which encloses part of the gamma chain. F(1) is attached to F(0) by a central stalk formed by the gamma and epsilon chains, while a peripheral stalk is formed by the delta and b chains.

The protein localises to the cell inner membrane. F(1)F(0) ATP synthase produces ATP from ADP in the presence of a proton or sodium gradient. F-type ATPases consist of two structural domains, F(1) containing the extramembraneous catalytic core and F(0) containing the membrane proton channel, linked together by a central stalk and a peripheral stalk. During catalysis, ATP synthesis in the catalytic domain of F(1) is coupled via a rotary mechanism of the central stalk subunits to proton translocation. Functionally, component of the F(0) channel, it forms part of the peripheral stalk, linking F(1) to F(0). The sequence is that of ATP synthase subunit b from Campylobacter concisus (strain 13826).